The primary structure comprises 545 residues: Heparanase (545 aa).

An N-terminal signal peptide occupies residues 1-37 (MLACRKPGLRPPLLLLLPLLGPLGPCSPGTPAAAAPA). 64–66 (DAN) lines the heparan sulfate group pocket. Positions 112–159 (PAFEERSYWLSQSNQDICKSGSIPSDVEEKLRLEWPFQEQVLLREQYQ) are cleaved as a propeptide — linker peptide. An intrachain disulfide couples Cys129 to Cys181. Heparan sulfate group is bound at residue 160-164 (KKFTN). Residues Asn164 and Asn219 are each glycosylated (N-linked (GlcNAc...) asparagine). Catalysis depends on Glu227, which acts as the Proton donor. Residues 272-282 (QPRRNTVKMLK), His298, and Arg305 each bind heparan sulfate group. A required for heterodimerization with the heparanase 8 kDa subunit region spans residues 290–419 (EVIDSVTWHH…LLFKKLVGNK (130 aa)). The active-site Nucleophile is the Glu345. Heparan sulfate group contacts are provided by residues 350–352 (FGG) and 391–393 (GNY). A disulfide bridge links Cys439 with Cys544. N-linked (GlcNAc...) asparagine glycosylation is present at Asn461. The required for transferring proheparanase to the Golgi apparatus, secretion and subsequent enzyme activity and for enhancement of PKB/AKT1 phosphorylation stretch occupies residues 529–545 (FSYGFFVIRNAKVAACI).

This sequence belongs to the glycosyl hydrolase 79 family. In terms of assembly, heterodimer; heterodimer formation between the 8 kDa and the 50 kDa subunits is required for enzyme activity. Interacts with TF; the interaction, inhibited by heparin, enhances the generation of activated factor X and activates coagulation. Interacts with HRG; the interaction is enhanced at acidic pH, partially inhibits binding of HPSE to cell surface receptors and modulates its enzymatic activity. Interacts with SDC1; the interaction enhances the shedding of SDC1. Interacts with HPSE2. In terms of processing, proteolytically processed. The cleavage of the 65 kDa form leads to the generation of a linker peptide, and the 8 kDa and the 50 kDa products. The active form, the 8/50 kDa heterodimer, is resistant to degradation. Complete removal of the linker peptide appears to be a prerequisite to the complete activation of the enzyme. Post-translationally, N-glycosylated. Glycosylation of the 50 kDa subunit appears to be essential for its solubility. Highly expressed in placenta and weakly in the kidney, lung, spleen and uterus.

Its subcellular location is the lysosome membrane. The protein resides in the secreted. The protein localises to the nucleus. It catalyses the reaction endohydrolysis of (1-&gt;4)-beta-D-glycosidic bonds of heparan sulfate chains in heparan sulfate proteoglycan.. Inhibited by laminarin sulfate and, to a lower extent, by heparin, sulfamin and EDTA. Activated by calcium and magnesium. Its function is as follows. Endoglycosidase that cleaves heparan sulfate proteoglycans (HSPGs) into heparan sulfate side chains and core proteoglycans. Participates in extracellular matrix (ECM) degradation and remodeling. Selectively cleaves the linkage between a glucuronic acid unit and an N-sulfo glucosamine unit carrying either a 3-O-sulfo or a 6-O-sulfo group. Can also cleave the linkage between a glucuronic acid unit and an N-sulfo glucosamine unit carrying a 2-O-sulfo group, but not linkages between a glucuronic acid unit and a 2-O-sulfated iduronic acid moiety. Essentially inactive at neutral pH but becomes active under acidic conditions such as during tumor invasion and in inflammatory processes. Facilitates cell migration associated with metastasis, wound healing and inflammation. Enhances shedding of syndecans. Acts as a procoagulant by enhancing the generation of activated factor X/F10 in the presence of tissue factor/TF and activated factor VII/F7. Independent of its enzymatic activity, increases cell adhesion to the extracellular matrix (ECM). Enhances AKT1/PKB phosphorylation, possibly via interaction with a lipid raft-resident receptor. Plays a role in the regulation of osteogenesis. Enhances angiogenesis through up-regulation of SRC-mediated activation of VEGF. Implicated in hair follicle inner root sheath differentiation and hair homeostasis. The polypeptide is Heparanase (HPSE) (Bos taurus (Bovine)).